Reading from the N-terminus, the 337-residue chain is Cysteinyl leukotriene receptor 1 (337 aa).

Residues 1 to 28 (MDETGNLTVSSATCHDTIDDFRNQVYST) are Extracellular-facing. N-linked (GlcNAc...) asparagine glycosylation occurs at asparagine 6. Residues 29–49 (LYSMISVVGFFGNGFVLYVLI) traverse the membrane as a helical segment. At 50-57 (KTYHKKSA) the chain is on the cytoplasmic side. A helical membrane pass occupies residues 58-78 (FQVYMINLAVADLLCVCTLPL). The Extracellular segment spans residues 79 to 106 (RVVYYVHKGIWLFGDFLCRLSTYALYVN). A disulfide bond links cysteine 96 and cysteine 173. Residues 107-127 (LYCSIFFMTAMSFFRCIAIVF) form a helical membrane-spanning segment. The Cytoplasmic segment spans residues 128 to 141 (PVQNINLVTQKKAR). The chain crosses the membrane as a helical span at residues 142–162 (FVCVGIWIFVILTSSPFLMAK). The Extracellular segment spans residues 163–193 (PQKDEKNNTKCFEPPQDNQTKNHVLVLHYVS). 2 N-linked (GlcNAc...) asparagine glycosylation sites follow: asparagine 169 and asparagine 180. Residues 194-214 (LFVGFIIPFVIIIVCYTMIIL) traverse the membrane as a helical segment. The Cytoplasmic portion of the chain corresponds to 215–230 (TLLKKSMKKNLSSHKK). A helical membrane pass occupies residues 231-251 (AIGMIMVVTAAFLVSFMPYHI). Residues 252-276 (QRTIHLHFLHNETKPCDSVLRMQKS) are Extracellular-facing. Residue asparagine 262 is glycosylated (N-linked (GlcNAc...) asparagine). Residues 277-297 (VVITLSLAASNCCFDPLLYFF) traverse the membrane as a helical segment. Residues 298–337 (SGGNFRKRLSTFRKHSLSSVTYVPRKKASLPEKGEEICKV) lie on the Cytoplasmic side of the membrane.

It belongs to the G-protein coupled receptor 1 family. Widely expressed, with highest levels in spleen and peripheral blood leukocytes. Lower expression in several tissues, such as lung (mostly in smooth muscle bundles and alveolar macrophages), placenta, small intestine, pancreas, colon and heart.

Its subcellular location is the cell membrane. Receptor for cysteinyl leukotrienes mediating bronchoconstriction of individuals with and without asthma. Stimulation by LTD4 results in the contraction and proliferation of smooth muscle, edema, eosinophil migration and damage to the mucus layer in the lung. This response is mediated via a G-protein that activates a phosphatidylinositol-calcium second messenger system. The rank order of affinities for the leukotrienes is LTD4 &gt;&gt; LTE4 = LTC4 &gt;&gt; LTB4. The polypeptide is Cysteinyl leukotriene receptor 1 (CYSLTR1) (Homo sapiens (Human)).